A 347-amino-acid chain; its full sequence is Gamma-glutamyl hydrolase 2 (347 aa).

Positions 1–22 (MWSYVWLPLVALSLFKDSIIMA) are cleaved as a signal peptide. One can recognise a Gamma-glutamyl hydrolase domain in the interval 45 to 341 (APDPNLNYRP…IGYDEVYIFT (297 aa)). C155 serves as the catalytic Nucleophile. Residue H268 is the Proton donor of the active site.

Belongs to the peptidase C26 family. In terms of tissue distribution, expressed in roots, in leaves, stems and siliques.

It is found in the vacuole. Its subcellular location is the secreted. It localises to the extracellular space. The protein localises to the cell wall. The catalysed reaction is (6S)-5,6,7,8-tetrahydrofolyl-(gamma-L-Glu)(n) + (n-1) H2O = (6S)-5,6,7,8-tetrahydrofolate + (n-1) L-glutamate. In terms of biological role, cleaves the polyglutamate sidechains of folate polyglutamates in the vacuole. Is important for polyglutamyl tail length determination before vacuolar exit. Plays a role on folate stability and intracellular folate content. Has endopeptidase activity against 4-amino-10-methylpteroyl penta-, tetra-, tri- and di-gamma-L-glutamate substrates and is responsible for the production of folic acid, also called pteroylglutamic acid (PteGlu) from teroylpolyglutamates. The chain is Gamma-glutamyl hydrolase 2 (GGH2) from Arabidopsis thaliana (Mouse-ear cress).